The following is a 251-amino-acid chain: Probable caffeoyl-CoA O-methyltransferase 3 (251 aa).

Residues Thr-61, Asp-83, 85–86 (GV), Ser-91, Asp-109, and Ala-138 each bind S-adenosyl-L-methionine. Asp-160 contacts a divalent metal cation. Asp-162 is a binding site for S-adenosyl-L-methionine. A divalent metal cation is bound by residues Asp-186 and Asn-187.

Belongs to the class I-like SAM-binding methyltransferase superfamily. Cation-dependent O-methyltransferase family. CCoAMT subfamily.

It carries out the reaction (E)-caffeoyl-CoA + S-adenosyl-L-methionine = (E)-feruloyl-CoA + S-adenosyl-L-homocysteine + H(+). The chain is Probable caffeoyl-CoA O-methyltransferase 3 (omt1) from Dictyostelium discoideum (Social amoeba).